A 180-amino-acid polypeptide reads, in one-letter code: Non-specific lipid transfer protein GPI-anchored 3 (180 aa).

Positions 1-22 are cleaved as a signal peptide; the sequence is MEAVRFAVAVVLVFCYVTSSNA. 4 disulfide bridges follow: C41/C78, C48/C62, C63/C104, and C76/C113. Residues N91 and N120 are each glycosylated (N-linked (GlcNAc...) asparagine). Composition is skewed to low complexity over residues 116–125 and 133–156; these read SAGTNSSSTP and PASS…TAKP. The disordered stretch occupies residues 116–156; sequence SAGTNSSSTPPATPKTPPASSTSTGTGSGSTGNAAPSTAKP. Residue S158 is the site of GPI-anchor amidated serine attachment. Residues 159-180 constitute a propeptide, removed in mature form; sequence SAPAINFGGLSFASAVVATLFF.

It belongs to the plant LTP family. In terms of tissue distribution, restricted to stamen, pollen and sporophytic tissues. Also detected, at low levels, in stems and leaves.

It is found in the cell membrane. In terms of biological role, lipid transfer protein involved in seed and ovule maturation and development, probably by regulating the fatty acids homeostasis during suberin and sporopollenin biosynthesis or deposition. This chain is Non-specific lipid transfer protein GPI-anchored 3, found in Arabidopsis thaliana (Mouse-ear cress).